We begin with the raw amino-acid sequence, 302 residues long: Tegument protein VP22 (302 aa).

Residues 1 to 10 (MASSDGDRLC) are compositionally biased toward basic and acidic residues. 2 disordered regions span residues 1–42 (MASS…PDDS) and 125–167 (SFTK…TATS). The tract at residues 154–244 (RPISFSTAPK…ANEADLGEGA (91 aa)) is interaction with gE. The segment covering 157–167 (SFSTAPKTATS) has biased composition (polar residues). Residues 212 to 224 (LDRLLTGAVIRIT) carry the Nuclear export signal motif. The disordered stretch occupies residues 243–302 (GASVSKRGHNRKTGDLQGGMGNEPMYAQVRKPKSRTDTQTTGRITNRSRARSASRTDARK).

The protein belongs to the alphaherpesvirinae VP22 tegument protein family. In terms of assembly, interacts with gE (via C-terminus); this interaction is necessary for the recruitment of VP22/ORF9 to the Golgi and its packaging into virions. Interacts with gM (via C-terminus). Interacts with VP16/ORF10; this interaction allows the formation of a tripartite complex composed of VP16/ORF10, VP22/ORF9 and VHS/ORF17. Interacts with the capsid-binding protein ORF44. Interacts with host CGAS. Highly phosphorylated in the host cell. Packaging is selective for underphosphorylated forms.

It is found in the virion tegument. The protein localises to the host cytoplasm. Its subcellular location is the host nucleus. The protein resides in the host Golgi apparatus. Functionally, tegument protein that plays different roles during the time course of infection. Participates in both the accumulation of viral mRNAs and viral protein translation at late time of infection. Modulates the RNase activity of the virion host shutoff protein ORF17 probably to ensure necessary levels of key cellular mRNAs and proteins. Plays a role in microtubule reorganization that occurs after viral infection by stabilizing microtubule network. Plays a role in the inhibition of host innate immune system by targeting the CGAS enzymatic activity which is the principal cytosolic DNA sensor that detects invading viral DNA. Acts by mediating disruption of liquid-like droplets in which CGAS is activated, thereby preventing CGAS activity. The chain is Tegument protein VP22 from Varicella-zoster virus (strain Oka vaccine) (HHV-3).